The sequence spans 435 residues: GTPase Der (435 aa).

2 consecutive EngA-type G domains span residues 4 to 167 (PVVA…PAEK) and 175 to 350 (ISFS…DNQN). Residues 10–17 (GQPNVGKS), 57–61 (DTGGI), 119–122 (NKAD), 181–188 (GRPNVGKS), 228–232 (DTAGI), and 293–296 (NKWD) contribute to the GTP site. One can recognise a KH-like domain in the interval 351–435 (QRIQSSVLND…PIKILPRKRK (85 aa)).

Belongs to the TRAFAC class TrmE-Era-EngA-EngB-Septin-like GTPase superfamily. EngA (Der) GTPase family. Associates with the 50S ribosomal subunit.

Its function is as follows. GTPase that plays an essential role in the late steps of ribosome biogenesis. This is GTPase Der from Lactobacillus helveticus (strain DPC 4571).